The chain runs to 82 residues: Small ribosomal subunit protein bS16 (82 aa).

The protein belongs to the bacterial ribosomal protein bS16 family.

This is Small ribosomal subunit protein bS16 from Aeromonas salmonicida (strain A449).